Consider the following 343-residue polypeptide: Protein RecA (343 aa).

An ATP-binding site is contributed by 64-71 (GPESSGKT).

The protein belongs to the RecA family.

The protein resides in the cytoplasm. In terms of biological role, can catalyze the hydrolysis of ATP in the presence of single-stranded DNA, the ATP-dependent uptake of single-stranded DNA by duplex DNA, and the ATP-dependent hybridization of homologous single-stranded DNAs. It interacts with LexA causing its activation and leading to its autocatalytic cleavage. This is Protein RecA from Bacillus cereus (strain ATCC 10987 / NRS 248).